A 300-amino-acid chain; its full sequence is N-carbamoylputrescine amidase (300 aa).

The 259-residue stretch at 8–266 folds into the CN hydrolase domain; sequence VTVAALQFAC…EAVLVAQFDL (259 aa). Glu-47 acts as the Proton acceptor in catalysis. The active-site Proton donor is Lys-120. Cys-157 acts as the Nucleophile in catalysis.

It belongs to the carbon-nitrogen hydrolase superfamily. Homooctamer.

The enzyme catalyses N-carbamoylputrescine + H2O + 2 H(+) = putrescine + NH4(+) + CO2. The protein operates within amine and polyamine biosynthesis; putrescine biosynthesis via agmatine pathway; putrescine from N-carbamoylputrescine (amidase route): step 1/1. Its function is as follows. Involved in polyamine biosynthesis. This Solanum tuberosum (Potato) protein is N-carbamoylputrescine amidase (CPA).